The sequence spans 367 residues: Ferrochelatase (367 aa).

The Fe cation site is built by H226 and E307.

It belongs to the ferrochelatase family.

The protein resides in the cytoplasm. The enzyme catalyses heme b + 2 H(+) = protoporphyrin IX + Fe(2+). Its pathway is porphyrin-containing compound metabolism; protoheme biosynthesis; protoheme from protoporphyrin-IX: step 1/1. Its function is as follows. Catalyzes the ferrous insertion into protoporphyrin IX. The polypeptide is Ferrochelatase (Burkholderia pseudomallei (strain 668)).